Here is a 2642-residue protein sequence, read N- to C-terminus: MQGPTNEPIAIIGTGCRFPGGSNTASKLWDLLKDPKDVSKEVPEDRFNLDRFYHKDSSHHGTANVRRSYLLDEDVRLFDTQFFGISPGEAQAMDPQHRVLLEVVYEAIESAGKTIHGLHNSDTAVYVGLMCTDYYVIQAADLNSVPTYNATGVANSNASSRVSYFFNWHGPSMTIDTACSSSLVAVHEAVQALRNGTSRMAVACGTNLILSPLPFISESNLSMLSPTGKSRMWDADADGYARGEGVAAVVLKPLSAAIEDNDVIECIIREVGVNQDGKTRGITMPSAQAQASLIRQTYAKAGLDPATPEGRCQFFEAHGTGTPAGDPQEAEALKTAFFPNETDSVTNGTNGLLSEADNLLVGSIKTVIGHTEGTAGLAGLIKACMALKHGAVPPNLLFNRLNPALEPFTKHLSIPTSLTPWPTLLTNVPRRASVNSFGFGGTNAHAILEAYSQAPQNSFATPSSSPLVVPAIPFVFSAASETSLRGVLESFLEYLNTSKDKDESLDLTSLAYILSTKRTVLSQRVSIIASTFEQLLEKVEAVLDDSASSVVGSKAATLSHPALLGVFTGQGAQWATMGTKLMRSNPLAQSVIQDLDAVLASLPECHRPRWSLGRELLADTTSRIKEAELSQPLCTAVQIMLVDLLKANGVQFQGVVGHSSGEIAAAYAAGFVSSADAIKIAYYRGYFAKLASGSSSTGKDSSVKGSMMAVGTTYEDAIELCQLEDFRGRISLAAHNGPNSVTLSGDSDAINQAHFIFSEEEKKFARLLKVDTAYHSSHMQPCVSPYTEALQACGIVAREPASDAPKWFSSVRSGKPVLDVDGLDCQYWVDNLLSPVMFHEAVQGCLDSSDTYNAILEIGPHAALKGPLDESVLELMGNKLPYTSALVRGKDDIESFSTALGFLWTQFGNQCVDLGTFQKRVSKDTGSKLCSTMDDLPTYAWTHDKPLWAESRSTKLFRTMPGSFHDLLGIQTADGTAEEWRWQNILKTKELPWMVGHALQGQIVFPGTGYIALAMEASLQIAQGRPVSKIDLYDLEIRKAIAVNESASGTELLVTMTNVSAIHPDVETITADFATYSTISRESGSMALNCCGKVCIFLQTETVTTTGSDGHAAEQFATRSTPVPGMAGIDVERFYSAMQHDLGYMYSGPFRGLSRLSRKLGFSEGSIQRPPFGEDGSETTLIFHPGMLDNALQGLFAAYSAPGDGRLWSMRAPTACRRVSLVPSLCGPNMTEEVDFDCTLTDSRDDFITGDVEVYASGYSQRIIEIEGLSFSPFAAATDRDDRQLFQEQIWCVNEADGPLVLGNMAPTFEERTKALDAERAAFFYLKKLHLSVPSDQRSQLPWYRQSLLDNAERLYDLVCSGTHSYAPQSWIQDTKEDVYAMMESYGPQDADFNLTKAVGENLPLPDVIKGDTNILQYMTQNNYLDRYYTHAIGFGWLNVLISGVVGQIADKHPKMRFLEIGAGTGGATGAVLDRIGQAYSSYTYTDISSGFFERAVDKFQDHAGKMLFKMLDIEKDPVSQGFPEHSYDIILAANVLHATKNLTETLQNTRRLLKPGGFLVLMEILGNDVMRIGLVMGGLPGWWVGKDDGRRWGPTITLEEWDTLLKGTGFAGVDTNTPMPDKVQMPGSVFVAQAVDDRIVKLRDPLQHDALPSAATDHVNGIQNGHTPSPTISKGTSHLVVIGGSSTSGSKLASDIIRVLSPLFAEIIHIPQLDSKDAIAKIPSNVDLHILSLTECDTGGTFFHNISNTAWQNFQHLLATSPASLLWVVPNTRSGNPLGAIGTGLFRSLFYEIPETKFQVLDLDEKATGYLSGCAGLIAKLVQQLRLVTDTSSARGPSTLTPETSEDDLQSVNDGTATVEMLWTVEPELYLHDGRLYISRVRLQKAQNDRYNSWRRPILQLTESKSTVDPSLSTSSLGRQTSLELQWKDDAYYNLKEINWFAKPLSTDSATIDVSCSLASCLKTPAGFFFVQVGTDVNTGEKKLCLSTENRSRVTVHSSWTETLKQEHDVADGQYMSFIVADMIVQQIMYMLPPTGILLLHEPDPGLASLLTRQLANIGRKVVFTTTRSDKSTNLLSKANWIFMHPRLNKRLIESALPHGVTFFIDCGQAEDVIHEGSHGKDHGLGLRLHNSLSRTCVKRTLQDLTSRTASVAPHEATGEVVKLLHRITTFAAAQLNSVPDGAPLKVKSLSEIVSRAKTRALATAEGCSTGPFCLVNWHAESQVPISVAPVWDRDDLFRSDRTYWMLGLTGDLGRSLAEFMISRGARHVVLSSRTPQPDEMWVERQQKKYGATVVYIAVDLTSLDSVQKAHKQIVKSMPPLAGVANGALVLKDSSVAKMTIEQLQAVLRPKVDGTLHLQSVVDANSGSEEQPLDWFIAFSSIVGTTGNLGQAAYSAANGFLKAWVSQQRSMFGHNAAVIDISRVLGVGYVERETQSNSGRLTREQTDRLMNRTGTLAMSETDLHQLFAEAVVAADHCSASNTGLSVGARDAEIITGIAPISSAQAEDVFWARNPRFGLLVIDSNAAVGGDDQDGKGSERRQVPVKTQLAAANTPQEVTSVLTSCIVTKLRASLFLSASDSFSETVALVDQGVDSLVGVDIRTWCIKELDVDVPVLKILGGASVVDLADYILESLPVKEKSK.

The Ketosynthase family 3 (KS3) domain occupies N6–A450. Active-site for beta-ketoacyl synthase activity residues include C179, H318, and H370. Residues V566 to K890 form a malonyl-CoA:ACP transacylase (MAT) domain region. The active-site For malonyltransferase activity is S659. The N-terminal hotdog fold stretch occupies residues H965–E1101. The interval H965–D1279 is dehydratase (DH) domain. Residues H965 to R1280 enclose the PKS/mFAS DH domain. The Proton acceptor; for dehydratase activity role is filled by H997. Residues M1126–R1280 form a C-terminal hotdog fold region. D1189 serves as the catalytic Proton donor; for dehydratase activity. Residues N1423–D1622 are methyltransferase (MET) domain. Residues T2244–S2423 are ketoreductase (KR) domain. Residues Q2556–L2635 form the Carrier domain. S2595 bears the O-(pantetheine 4'-phosphoryl)serine mark.

Requires pantetheine 4'-phosphate as cofactor.

Its pathway is secondary metabolite biosynthesis. Reducing polyketide synthase; part of the gene cluster that mediates the biosynthesis of fusarielins F, G and H, decaketide compounds with 5 methylations and a decaline core that act as mycoestrogens as they stimulate growth of MCF-7 breast cancer cells. The initial compound in the pathway is produced by the reducing polyketide synthase FSL1. FSL1 lacks an active enoyl reductase (ER) domain and biosynthesis of fusarielins relies on the trans-acting enoyl reductase FSL5, before it is released through hydrolysis catalyzed by the thioesterase FSL2. Fusarielins F, G, and H have a C11=C12 cis double bond and is fully reduced between C10 and C11 and between C12 and C13. FSL3 can be involved in the formation of the C11=C12 cis double bond by moving a hypothetical C10=C11 or C12=C13 trans double bond to form prefusarielin. Prefusarielin is oxygenated at C15 and C16 by the cytochrome P450 monooxygenase FSL4, resulting in fusarielin F, which subsequently is epoxidized into fusarielin G by the same enzyme. The final step in the pathway is a reduction of the carboxylic acid moiety to yield fusarielin H via a still undetermined mechanism. The sequence is that of Fusarielin synthase FSL1 from Gibberella zeae (strain ATCC MYA-4620 / CBS 123657 / FGSC 9075 / NRRL 31084 / PH-1) (Wheat head blight fungus).